A 369-amino-acid chain; its full sequence is Omega-amidase, chloroplastic (369 aa).

The transit peptide at 1-63 (MKSAISSSLF…SALRSISSSM (63 aa)) directs the protein to the chloroplast. Ala64 bears the N-acetylalanine mark. The 250-residue stretch at 88–337 (FNIGLCQLSV…EAIIIAEIDY (250 aa)) folds into the CN hydrolase domain. Glu127 serves as the catalytic Proton acceptor. Catalysis depends on Lys201, which acts as the Proton donor. Cys242 acts as the Nucleophile in catalysis.

It belongs to the nitrilase superfamily. NIT1/NIT2 family.

Its subcellular location is the plastid. The protein resides in the chloroplast. The enzyme catalyses a monoamide of a dicarboxylate + H2O = a dicarboxylate + NH4(+). Functionally, omega-amidase involved in the metabolism of asparagine. Probably also closely coupled with glutamine transamination in the methionine salvage cycle. Can use alpha-ketosuccinamate and alpha-hydroxysuccinamate as substrates, producing respectively oxaloacetate and malate, or alpha-ketoglutaramate, producing alpha-ketoglutarate. The chain is Omega-amidase, chloroplastic from Arabidopsis thaliana (Mouse-ear cress).